Consider the following 2185-residue polypeptide: Genome polyprotein (2185 aa).

Residue Gly2 is the site of N-myristoyl glycine; by host attachment. The Cytoplasmic segment spans residues 2 to 1495; the sequence is GAQVSTQKTG…HVSRAFICLQ (1494 aa). The interval 568 to 584 is amphipathic alpha-helix; the sequence is FFQGPVEDAITAAIGRV. Catalysis depends on for protease 2A activity residues His872 and Asp890. Zn(2+) is bound by residues Cys907 and Cys909. Cys961 acts as the For protease 2A activity in catalysis. The Zn(2+) site is built by Cys967 and His969. The membrane-binding stretch occupies residues 1101–1173; the sequence is NNGWLKKFTE…EQSAPSQSDQ (73 aa). The segment at 1101-1239 is oligomerization; it reads NNGWLKKFTE…SPGAGKSVAT (139 aa). The interval 1122–1126 is RNA-binding; it reads AIKIQ. An SF3 helicase domain is found at 1205 to 1361; it reads EKKMSNYIQF…SMYSQNGKIN (157 aa). Cys1369, Cys1381, and Cys1386 together coordinate Zn(2+). A C4-type; degenerate zinc finger spans residues 1369 to 1386; it reads CDEECCPVNFKKCCPLVC. The segment at 1413–1420 is RNA-binding; that stretch reads EYNHRHSV. The segment at 1424–1429 is oligomerization; it reads LEALFQ. The stretch at 1496–1511 is an intramembrane region; it reads AITTFVSVAGIIYIIY. Over 1512–2185 the chain is Cytoplasmic; that stretch reads KLFAGFQGAY…TIRRKWLDSF (674 aa). The residue at position 1521 (Tyr1521) is an O-(5'-phospho-RNA)-tyrosine. A Peptidase C3 domain is found at 1541 to 1719; the sequence is GPAFEFAVAM…FSAALLKHYF (179 aa). Catalysis depends on for protease 3C activity residues His1580, Glu1611, and Cys1687. A RdRp catalytic domain is found at 1950–2066; sequence GHLIAFDYSG…SYPWPIDASL (117 aa). 2 residues coordinate Mg(2+): Asp1956 and Asp2052.

This sequence belongs to the picornaviruses polyprotein family. As to quaternary structure, interacts with capsid protein VP1 and capsid protein VP3 to form heterotrimeric protomers. Interacts with capsid protein VP0, and capsid protein VP3 to form heterotrimeric protomers. Five protomers subsequently associate to form pentamers which serve as building blocks for the capsid. Interacts with capsid protein VP2, capsid protein VP3 and capsid protein VP4 following cleavage of capsid protein VP0. Interacts with host CD55. Interacts with host CXADR. In terms of assembly, interacts with capsid protein VP1 and capsid protein VP3 in the mature capsid. As to quaternary structure, interacts with capsid protein VP0 and capsid protein VP1 to form heterotrimeric protomers. Five protomers subsequently associate to form pentamers which serve as building blocks for the capsid. Interacts with capsid protein VP4 in the mature capsid. Interacts with protein 2C; this interaction may be important for virion morphogenesis. Interacts with capsid protein VP1 and capsid protein VP3. In terms of assembly, homodimer. As to quaternary structure, homohexamer; forms a hexameric ring structure with 6-fold symmetry characteristic of AAA+ ATPases. Interacts (via N-terminus) with host RTN3 (via reticulon domain); this interaction is important for viral replication. Interacts with capsid protein VP3; this interaction may be important for virion morphogenesis. Interacts with protein 3CD. In terms of assembly, homodimer. Interacts with host GBF1. Interacts (via GOLD domain) with host ACBD3 (via GOLD domain); this interaction allows the formation of a viral protein 3A/ACBD3 heterotetramer with a 2:2 stoichiometry, which will stimulate the recruitment of host PI4KB in order to synthesize PI4P at the viral RNA replication sites. As to quaternary structure, interacts with RNA-directed RNA polymerase. Interacts with host TICAM1 (via C-terminus). In terms of assembly, interacts with protein 3AB and with RNA-directed RNA polymerase. As to quaternary structure, interacts with Viral protein genome-linked and with protein 3CD. The cofactor is Mg(2+). In terms of processing, specific enzymatic cleavages in vivo by the viral proteases yield processing intermediates and the mature proteins. Myristoylation is required for the formation of pentamers during virus assembly. Further assembly of 12 pentamers and a molecule of genomic RNA generates the provirion. Post-translationally, during virion maturation, immature virions are rendered infectious following cleavage of VP0 into VP4 and VP2. This maturation seems to be an autocatalytic event triggered by the presence of RNA in the capsid and it is followed by a conformational change infectious virion. In terms of processing, myristoylation is required during RNA encapsidation and formation of the mature virus particle. VPg is uridylylated by the polymerase into VPg-pUpU. This acts as a nucleotide-peptide primer for the genomic RNA replication.

The protein resides in the virion. It is found in the host cytoplasm. The protein localises to the host cytoplasmic vesicle membrane. Its subcellular location is the host nucleus. It catalyses the reaction a ribonucleoside 5'-triphosphate + H2O = a ribonucleoside 5'-diphosphate + phosphate + H(+). The catalysed reaction is Selective cleavage of Tyr-|-Gly bond in the picornavirus polyprotein.. It carries out the reaction RNA(n) + a ribonucleoside 5'-triphosphate = RNA(n+1) + diphosphate. The enzyme catalyses Selective cleavage of Gln-|-Gly bond in the poliovirus polyprotein. In other picornavirus reactions Glu may be substituted for Gln, and Ser or Thr for Gly.. Replication or transcription is subject to high level of random mutations by the nucleotide analog ribavirin. In terms of biological role, forms an icosahedral capsid of pseudo T=3 symmetry with capsid proteins VP2 and VP3. The capsid is 300 Angstroms in diameter, composed of 60 copies of each capsid protein and enclosing the viral positive strand RNA genome. Capsid protein VP1 mainly forms the vertices of the capsid. Capsid protein VP1 interacts with host cell receptors CD55 and CXADR to provide virion attachment to target host cells. This attachment induces virion internalization. Tyrosine kinases are probably involved in the entry process. After binding to its receptor, the capsid undergoes conformational changes. Capsid protein VP1 N-terminus (that contains an amphipathic alpha-helix) and capsid protein VP4 are externalized. Together, they shape a pore in the host membrane through which viral genome is translocated to host cell cytoplasm. Forms an icosahedral capsid of pseudo T=3 symmetry with capsid proteins VP2 and VP3. The capsid is 300 Angstroms in diameter, composed of 60 copies of each capsid protein and enclosing the viral positive strand RNA genome. Its function is as follows. Lies on the inner surface of the capsid shell. After binding to the host receptor, the capsid undergoes conformational changes. Capsid protein VP4 is released, Capsid protein VP1 N-terminus is externalized, and together, they shape a pore in the host membrane through which the viral genome is translocated into the host cell cytoplasm. Functionally, component of immature procapsids, which is cleaved into capsid proteins VP4 and VP2 after maturation. Allows the capsid to remain inactive before the maturation step. In terms of biological role, cysteine protease that cleaves viral polyprotein and specific host proteins. It is responsible for the autocatalytic cleavage between the P1 and P2 regions, which is the first cleavage occurring in the polyprotein. Also cleaves the host translation initiation factor EIF4G1, in order to shut down the capped cellular mRNA translation. Inhibits the host nucleus-cytoplasm protein and RNA trafficking by cleaving host members of the nuclear pores. Counteracts stress granule formation probably by antagonizing its assembly or promoting its dissassembly. Cleaves and inhibits host IFIH1/MDA5, thereby inhibiting the type-I IFN production and the establishment of the antiviral state. Cleaves and inhibits host MAVS, thereby inhibiting the type-I IFN production and the establishment of the antiviral state. Plays an essential role in the virus replication cycle by acting as a viroporin. Creates a pore in the host endoplasmic reticulum and as a consequence releases Ca2+ in the cytoplasm of infected cell. In turn, high levels of cytoplasmic calcium may trigger membrane trafficking and transport of viral ER-associated proteins to viroplasms, sites of viral genome replication. Its function is as follows. Induces and associates with structural rearrangements of intracellular membranes. Displays RNA-binding, nucleotide binding and NTPase activities. May play a role in virion morphogenesis and viral RNA encapsidation by interacting with the capsid protein VP3. Functionally, localizes the viral replication complex to the surface of membranous vesicles. Together with protein 3CD binds the Cis-Active RNA Element (CRE) which is involved in RNA synthesis initiation. Acts as a cofactor to stimulate the activity of 3D polymerase, maybe through a nucleid acid chaperone activity. In terms of biological role, localizes the viral replication complex to the surface of membranous vesicles. It inhibits host cell endoplasmic reticulum-to-Golgi apparatus transport and causes the disassembly of the Golgi complex, possibly through GBF1 interaction. This would result in depletion of MHC, trail receptors and IFN receptors at the host cell surface. Plays an essential role in viral RNA replication by recruiting ACBD3 and PI4KB at the viral replication sites, thereby allowing the formation of the rearranged membranous structures where viral replication takes place. Acts as a primer for viral RNA replication and remains covalently bound to viral genomic RNA. VPg is uridylylated prior to priming replication into VPg-pUpU. The oriI viral genomic sequence may act as a template for this. The VPg-pUpU is then used as primer on the genomic RNA poly(A) by the RNA-dependent RNA polymerase to replicate the viral genome. During genome replication, the VPg-RNA linkage is removed by the host TDP2, thereby accelerating replication. During the late stage of the replication cycle, host TDP2 is excluded from sites of viral RNA synthesis and encapsidation, allowing for the generation of progeny virions. Its function is as follows. Involved in the viral replication complex and viral polypeptide maturation. It exhibits protease activity with a specificity and catalytic efficiency that is different from protease 3C. Protein 3CD lacks polymerase activity. Protein 3CD binds to the 5'UTR of the viral genome. Functionally, major viral protease that mediates proteolytic processing of the polyprotein. Cleaves host EIF5B, contributing to host translation shutoff. Also cleaves host PABPC1, contributing to host translation shutoff. Cleaves and inhibits host RIGI, thereby inhibiting the type-I IFN production and the establishment of the antiviral state. Cleaves and inhibits host MAVS, thereby inhibiting the type-I IFN production and the establishment of the antiviral state. Cleaves and inhibits host TICAM1/TRIF, thereby inhibiting the type-I IFN production. Cleaves host NLRP1, triggers host N-glycine-mediated degradation of the autoinhibitory NLRP1 N-terminal fragment. In terms of biological role, replicates the viral genomic RNA on the surface of intracellular membranes. May form linear arrays of subunits that propagate along a strong head-to-tail interaction called interface-I. Covalently attaches UMP to a tyrosine of VPg, which is used to prime RNA synthesis. The positive stranded RNA genome is first replicated at virus induced membranous vesicles, creating a dsRNA genomic replication form. This dsRNA is then used as template to synthesize positive stranded RNA genomes. ss(+)RNA genomes are either translated, replicated or encapsidated. The polypeptide is Genome polyprotein (Homo sapiens (Human)).